The following is a 217-amino-acid chain: Ribosomal RNA small subunit methyltransferase G (217 aa).

Residues G78, F83, 129 to 130 (AE), and R146 contribute to the S-adenosyl-L-methionine site.

It belongs to the methyltransferase superfamily. RNA methyltransferase RsmG family.

Its subcellular location is the cytoplasm. It carries out the reaction guanosine(527) in 16S rRNA + S-adenosyl-L-methionine = N(7)-methylguanosine(527) in 16S rRNA + S-adenosyl-L-homocysteine. Functionally, specifically methylates the N7 position of guanine in position 527 of 16S rRNA. This is Ribosomal RNA small subunit methyltransferase G from Geobacter sp. (strain M21).